A 574-amino-acid chain; its full sequence is Probable glucomannan 4-beta-mannosyltransferase 6 (574 aa).

A helical transmembrane segment spans residues 87–107; that stretch reads VVACMVMSVIVLAEKVFLGVV. The active site involves Asp180. The substrate site is built by Asp239 and Asp241. Residue Asp333 is part of the active site. A run of 4 helical transmembrane segments spans residues 412–432, 437–457, 523–543, and 548–568; these read IIST…KVFF, IPLW…SVGT, FHCL…YDYL, and IFYI…FEFM.

The protein belongs to the glycosyltransferase 2 family. Plant cellulose synthase-like A subfamily.

It is found in the golgi apparatus membrane. It catalyses the reaction GDP-mannose + (glucomannan)n = GDP + (glucomannan)n+1.. Probable mannan synthase which consists of a 4-beta-mannosyltransferase activity on mannan using GDP-mannose. The beta-1,4-mannan product is the backbone for galactomannan synthesis by galactomannan galactosyltransferase. Galactomannan is a noncellulosic polysaccharides of plant cell wall. The sequence is that of Probable glucomannan 4-beta-mannosyltransferase 6 from Oryza sativa subsp. japonica (Rice).